Reading from the N-terminus, the 862-residue chain is Protein PRQFV-amide (862 aa).

The N-terminal stretch at 1-20 (MSSQLLICSVFVLFTFGPNS) is a signal peptide. The propeptide occupies 21-79 (FPSCLAQEQAGNSDATQLSADAKAPESAKDKSGDVQNDGTKSVRSKRDLEIDFGSGDVQ). The tract at residues 32–68 (NSDATQLSADAKAPESAKDKSGDVQNDGTKSVRSKRD) is disordered. Residues 43 to 53 (KAPESAKDKSG) are compositionally biased toward basic and acidic residues. V86 bears the Valine amide mark. A propeptide spanning residues 90-149 (AAPPVFQTPLVQDKISGFIPSETESPVIGEFAFPGSVFMDDEEALGAEEEPMDDEDLEFY) is cleaved from the precursor. V156 carries the post-translational modification Valine amide. Residues 160-175 (GIDDYLLQEKLKDFIE) constitute a propeptide that is removed on maturation. Valine amide occurs at positions 182, 190, 198, 206, 214, 222, 230, 238, and 246. Residues 250 to 259 (EADPSFLFED) constitute a propeptide that is removed on maturation. Position 266 is a valine amide (V266). Residues 270 to 300 (SLDFLGGANWYNPYDVTMEPQSEGSDLQGFS) constitute a propeptide that is removed on maturation. At V307 the chain carries Valine amide. Residues 311-319 (DAFDMFEFS) constitute a propeptide that is removed on maturation. Position 326 is a valine amide (V326). Positions 330 to 338 (DQDEMFDFS) are excised as a propeptide. At V345 the chain carries Valine amide. Positions 349-357 (DLQEFFDLS) are excised as a propeptide. A Valine amide modification is found at V364. Positions 368-376 (EFDDEIDFS) are excised as a propeptide. Position 383 is a valine amide (V383). The propeptide occupies 387–395 (ENDDDFDLS). V402 carries the post-translational modification Valine amide. Residues 406-414 (ENDDEFDLS) constitute a propeptide that is removed on maturation. The residue at position 421 (V421) is a Valine amide. Residues 424–434 (RENDDELEFSK) are compositionally biased toward basic and acidic residues. The tract at residues 424-528 (RENDDELEFS…NNDDLDFSKR (105 aa)) is disordered. Positions 425–433 (ENDDELEFS) are excised as a propeptide. V440 carries the post-translational modification Valine amide. A compositionally biased stretch (basic and acidic residues) spans 441–452 (GKREDDEIDFSK). The propeptide occupies 444-451 (EDDEIDFS). V458 carries the post-translational modification Valine amide. Residues 459-471 (GKRENDGEIDFSK) are compositionally biased toward basic and acidic residues. A propeptide spanning residues 462-470 (ENDGEIDFS) is cleaved from the precursor. Residue V477 is modified to Valine amide. Residues 478–490 (GKRENDDEIDFSK) show a composition bias toward basic and acidic residues. The propeptide occupies 481–489 (ENDDEIDFS). V496 is modified (valine amide). Over residues 497-508 (GKREDGEIDFSK) the composition is skewed to basic and acidic residues. Residues 500 to 507 (EDGEIDFS) constitute a propeptide that is removed on maturation. Position 514 is a valine amide (V514). Positions 515–527 (GKRENNDDLDFSK) are enriched in basic and acidic residues. A propeptide spanning residues 518 to 526 (ENNDDLDFS) is cleaved from the precursor. V533 is subject to Valine amide. Residues 537–545 (EVDDEIDFS) constitute a propeptide that is removed on maturation. The tract at residues 549–634 (RQFVGKREND…RQFVGKREND (86 aa)) is disordered. The residue at position 552 (V552) is a Valine amide. The span at 553 to 565 (GKRENDDDLDFSK) shows a compositional bias: basic and acidic residues. Positions 556–564 (ENDDDLDFS) are excised as a propeptide. A Valine amide modification is found at V571. Positions 572–584 (GKRENDDDLEFSK) are enriched in basic and acidic residues. The propeptide occupies 575 to 583 (ENDDDLEFS). Valine amide is present on V590. The propeptide occupies 594–602 (ENDPLLDFS). Position 609 is a valine amide (V609). Positions 610–622 (GKRENDDDLDFSK) are enriched in basic and acidic residues. The propeptide occupies 613-621 (ENDDDLDFS). Valine amide is present on V628. Positions 632–640 (ENDPLIDFS) are excised as a propeptide. Position 647 is a valine amide (V647). A propeptide spanning residues 651 to 659 (ESDGDFELS) is cleaved from the precursor. A Valine amide modification is found at V666. A propeptide spanning residues 670–677 (DVDGPGLS) is cleaved from the precursor. The residue at position 684 (V684) is a Valine amide. Residues 688-695 (EDYDIDFA) constitute a propeptide that is removed on maturation. Residue V702 is modified to Valine amide. Residues 706 to 714 (GNEDEFEMS) constitute a propeptide that is removed on maturation. V721 is subject to Valine amide. Residues 724 to 757 (RNFEELDQDFLRHMHDILDKRIPQFVSLPSLTAA) constitute a propeptide that is removed on maturation. Position 764 is a valine amide (V764). Residues 768–812 (SDAAFLETLRHLRDYVGGQDEQNVSEFSYQHPYPSDLNDVGLIQQ) constitute a propeptide that is removed on maturation. A Valine amide modification is found at V819. Residues 823 to 862 (GGDVDDINTTYRLGDFVSQPMSFVEEPSWLCRQLNAFGIS) constitute a propeptide that is removed on maturation.

In terms of tissue distribution, expressed abundantly in the abdominal ganglion, much less in the pedal and cerebral ganglia, and rarely in the buccal and pleural ganglia.

Its subcellular location is the secreted. PRQFV-amide may act as a modulator within the feeding system as well as in other systems of Aplysia. This chain is Protein PRQFV-amide, found in Aplysia californica (California sea hare).